Here is a 431-residue protein sequence, read N- to C-terminus: Serine--tRNA ligase (431 aa).

238–240 (TSE) is an L-serine binding site. 269–271 (RSE) is a binding site for ATP. Glutamate 292 contributes to the L-serine binding site. Position 356 to 359 (356 to 359 (EISS)) interacts with ATP. Serine 391 is a binding site for L-serine.

The protein belongs to the class-II aminoacyl-tRNA synthetase family. Type-1 seryl-tRNA synthetase subfamily. In terms of assembly, homodimer. The tRNA molecule binds across the dimer.

The protein localises to the cytoplasm. The enzyme catalyses tRNA(Ser) + L-serine + ATP = L-seryl-tRNA(Ser) + AMP + diphosphate + H(+). It catalyses the reaction tRNA(Sec) + L-serine + ATP = L-seryl-tRNA(Sec) + AMP + diphosphate + H(+). It functions in the pathway aminoacyl-tRNA biosynthesis; selenocysteinyl-tRNA(Sec) biosynthesis; L-seryl-tRNA(Sec) from L-serine and tRNA(Sec): step 1/1. In terms of biological role, catalyzes the attachment of serine to tRNA(Ser). Is also able to aminoacylate tRNA(Sec) with serine, to form the misacylated tRNA L-seryl-tRNA(Sec), which will be further converted into selenocysteinyl-tRNA(Sec). This chain is Serine--tRNA ligase, found in Leptothrix cholodnii (strain ATCC 51168 / LMG 8142 / SP-6) (Leptothrix discophora (strain SP-6)).